The chain runs to 423 residues: Probable WRKY transcription factor 58 (423 aa).

Disordered stretches follow at residues 91 to 128, 142 to 171, and 215 to 284; these read SSAH…AVHG, RNHY…DGYN, and IYKG…GVST. Low complexity-rich tracts occupy residues 99–111 and 144–162; these read QPRQ…PQRP and HYNN…VVNV. The WRKY 1 DNA-binding region spans 161–225; it reads NVDKPADDGY…YKGQHDHERP (65 aa). The segment covering 259-271 has biased composition (acidic residues); sequence DDDDDDDEDDEDL. The WRKY 2 DNA-binding region spans 300-365; the sequence is SEVDLLDDGY…YEGKHNHDVP (66 aa).

Its subcellular location is the nucleus. Its function is as follows. Transcription factor. Interacts specifically with the W box (5'-(T)TGAC[CT]-3'), a frequently occurring elicitor-responsive cis-acting element. The sequence is that of Probable WRKY transcription factor 58 (WRKY58) from Arabidopsis thaliana (Mouse-ear cress).